The following is a 632-amino-acid chain: tRNA uridine 5-carboxymethylaminomethyl modification enzyme MnmG (632 aa).

Position 13 to 18 (13 to 18) interacts with FAD; it reads GGGHAG. 274–288 contributes to the NAD(+) binding site; it reads GPRYCPSIEDKVMRF.

The protein belongs to the MnmG family. In terms of assembly, homodimer. Heterotetramer of two MnmE and two MnmG subunits. FAD serves as cofactor.

Its subcellular location is the cytoplasm. Functionally, NAD-binding protein involved in the addition of a carboxymethylaminomethyl (cmnm) group at the wobble position (U34) of certain tRNAs, forming tRNA-cmnm(5)s(2)U34. In Dichelobacter nodosus (strain VCS1703A), this protein is tRNA uridine 5-carboxymethylaminomethyl modification enzyme MnmG.